Here is a 367-residue protein sequence, read N- to C-terminus: Probable butyrate kinase (367 aa).

Belongs to the acetokinase family.

It is found in the cytoplasm. The enzyme catalyses butanoate + ATP = butanoyl phosphate + ADP. This Bacillus cereus (strain ZK / E33L) protein is Probable butyrate kinase.